The following is a 230-amino-acid chain: Uracil-DNA glycosylase (230 aa).

The Proton acceptor role is filled by aspartate 71.

Belongs to the uracil-DNA glycosylase (UDG) superfamily. UNG family.

Its subcellular location is the cytoplasm. The catalysed reaction is Hydrolyzes single-stranded DNA or mismatched double-stranded DNA and polynucleotides, releasing free uracil.. Functionally, excises uracil residues from the DNA which can arise as a result of misincorporation of dUMP residues by DNA polymerase or due to deamination of cytosine. In Nocardioides sp. (strain ATCC BAA-499 / JS614), this protein is Uracil-DNA glycosylase.